A 333-amino-acid chain; its full sequence is Holliday junction branch migration complex subunit RuvB (333 aa).

The tract at residues 1 to 182 (MDERLLSGES…FGVLSRLEYY (182 aa)) is large ATPase domain (RuvB-L). Residues Leu21, Arg22, Gly63, Lys66, Thr67, Thr68, 129-131 (EDF), Arg172, Tyr182, and Arg219 each bind ATP. Residue Thr67 participates in Mg(2+) binding. The small ATPAse domain (RuvB-S) stretch occupies residues 183–253 (TVDQLSAIVE…ITQMALELLQ (71 aa)). Positions 256 to 333 (KLGLDHIDHK…EHFGMEMPKV (78 aa)) are head domain (RuvB-H). Arg311 and Arg316 together coordinate DNA.

The protein belongs to the RuvB family. In terms of assembly, homohexamer. Forms an RuvA(8)-RuvB(12)-Holliday junction (HJ) complex. HJ DNA is sandwiched between 2 RuvA tetramers; dsDNA enters through RuvA and exits via RuvB. An RuvB hexamer assembles on each DNA strand where it exits the tetramer. Each RuvB hexamer is contacted by two RuvA subunits (via domain III) on 2 adjacent RuvB subunits; this complex drives branch migration. In the full resolvosome a probable DNA-RuvA(4)-RuvB(12)-RuvC(2) complex forms which resolves the HJ.

The protein resides in the cytoplasm. The catalysed reaction is ATP + H2O = ADP + phosphate + H(+). Its function is as follows. The RuvA-RuvB-RuvC complex processes Holliday junction (HJ) DNA during genetic recombination and DNA repair, while the RuvA-RuvB complex plays an important role in the rescue of blocked DNA replication forks via replication fork reversal (RFR). RuvA specifically binds to HJ cruciform DNA, conferring on it an open structure. The RuvB hexamer acts as an ATP-dependent pump, pulling dsDNA into and through the RuvAB complex. RuvB forms 2 homohexamers on either side of HJ DNA bound by 1 or 2 RuvA tetramers; 4 subunits per hexamer contact DNA at a time. Coordinated motions by a converter formed by DNA-disengaged RuvB subunits stimulates ATP hydrolysis and nucleotide exchange. Immobilization of the converter enables RuvB to convert the ATP-contained energy into a lever motion, pulling 2 nucleotides of DNA out of the RuvA tetramer per ATP hydrolyzed, thus driving DNA branch migration. The RuvB motors rotate together with the DNA substrate, which together with the progressing nucleotide cycle form the mechanistic basis for DNA recombination by continuous HJ branch migration. Branch migration allows RuvC to scan DNA until it finds its consensus sequence, where it cleaves and resolves cruciform DNA. This chain is Holliday junction branch migration complex subunit RuvB, found in Bacillus cereus (strain 03BB102).